Consider the following 308-residue polypeptide: Cell division protein FtsQ (308 aa).

Positions 1 to 28 are disordered; that stretch reads MQSLSFPPNRRTPRLAPPRRETGRRDPA. At 1–46 the chain is on the cytoplasmic side; it reads MQSLSFPPNRRTPRLAPPRRETGRRDPAPSRWAYRAQRLWLTPMFR. Positions 18 to 28 are enriched in basic and acidic residues; the sequence is PRRETGRRDPA. Residues 47 to 67 traverse the membrane as a helical segment; that stretch reads TALRVGLPIVGVLLVVALIFA. The Periplasmic segment spans residues 68–308; the sequence is SADRRAAMAG…RGIDTSGSDL (241 aa). Positions 92–160 constitute a POTRA domain; that stretch reads FMVTLLSVDG…GLLEVRVTER (69 aa).

The protein belongs to the FtsQ/DivIB family. FtsQ subfamily.

The protein localises to the cell inner membrane. Its function is as follows. Essential cell division protein. The polypeptide is Cell division protein FtsQ (Cereibacter sphaeroides (strain ATCC 17023 / DSM 158 / JCM 6121 / CCUG 31486 / LMG 2827 / NBRC 12203 / NCIMB 8253 / ATH 2.4.1.) (Rhodobacter sphaeroides)).